The following is a 244-amino-acid chain: Capsid protein (244 aa).

A Bipartite nuclear localization signal motif is present at residues 1–24 (MSTSKRKRADEAQWNKRSTKKKGS). The disordered stretch occupies residues 1–39 (MSTSKRKRADEAQWNKRSTKKKGSAPQAKKPGGKGERPS).

Belongs to the geminiviridae capsid protein family. As to quaternary structure, homomultimer. Interacts with the movement protein. Binds to single-stranded and double-stranded viral DNA.

It localises to the virion. The protein localises to the host nucleus. Its function is as follows. Encapsidates the viral genome into characteristic twinned ('geminate') particles. Binds the genomic viral ssDNA and shuttles it into and out of the cell nucleus. Plays a role in protection of the genome from degradation, virus acquisition and transmission by insect vectors, infectivity, and systemic movement. The CP of monopartite geminiviruses is absolutely essential for virus movement. This Avena sativa (Oat) protein is Capsid protein.